The following is a 494-amino-acid chain: Glucose-6-phosphate exchanger SLC37A2 (494 aa).

A helical membrane pass occupies residues 20–37 (YRFSILFLTFVFYTSYHL). N-linked (GlcNAc...) asparagine glycans are attached at residues Asn52, Asn63, and Asn67. The next 11 helical transmembrane spans lie at 85–105 (FGVLDNCFLVAYAVGMFFSGI), 116–136 (LSTGMLLSGLFTALFGLGFYW), 146–166 (LVQALNGLVQTTGWPAVVACV), 187–207 (SVGNILGSLIAGVYVSSAWGL), 208–228 (SFIVPGIIIASTGVICFLFLV), 295–315 (LCLLFAKLVSYTFLYWLPLYI), 327–347 (GDLSTLFDVGGILGGIVAGLV), 355–375 (ASTCCAMLIIAAPMLFLYNKI), 384–404 (VGMLLWCGALVNGPYALITTA), 427–447 (AIIDGTGSIGAAVGPLLAGLI), and 455–475 (VFYMLIAADVLACLLLSRLVY).

This sequence belongs to the major facilitator superfamily. Organophosphate:Pi antiporter (OPA) (TC 2.A.1.4) family.

Its subcellular location is the endoplasmic reticulum membrane. It catalyses the reaction D-glucose 6-phosphate(in) + phosphate(out) = D-glucose 6-phosphate(out) + phosphate(in). Its function is as follows. Inorganic phosphate and glucose-6-phosphate antiporter. May transport cytoplasmic glucose-6-phosphate into the lumen of the endoplasmic reticulum and translocate inorganic phosphate into the opposite direction. In Danio rerio (Zebrafish), this protein is Glucose-6-phosphate exchanger SLC37A2.